We begin with the raw amino-acid sequence, 221 residues long: N-(5'-phosphoribosyl)anthranilate isomerase (221 aa).

The protein belongs to the TrpF family.

It catalyses the reaction N-(5-phospho-beta-D-ribosyl)anthranilate = 1-(2-carboxyphenylamino)-1-deoxy-D-ribulose 5-phosphate. It participates in amino-acid biosynthesis; L-tryptophan biosynthesis; L-tryptophan from chorismate: step 3/5. This chain is N-(5'-phosphoribosyl)anthranilate isomerase, found in Geobacillus thermodenitrificans (strain NG80-2).